Reading from the N-terminus, the 941-residue chain is Translation initiation factor IF-2 (941 aa).

Disordered regions lie at residues 61 to 204 (IQSN…RREN) and 249 to 274 (QEKDKETKKAKKSNKPKAIPAAKNNK). Residues 147–163 (EKAKQKLQEIQKSREAL) show a composition bias toward basic and acidic residues. Residues 164–179 (NKLTQSNTNNANNANS) show a composition bias toward low complexity. Residues 180–204 (AKKEISEVAKQEREQEHLDNKRREN) show a composition bias toward basic and acidic residues. The region spanning 440–609 (ERPPVVTIMG…LIQADIMELK (170 aa)) is the tr-type G domain. The G1 stretch occupies residues 449 to 456 (GHVDHGKT). 449 to 456 (GHVDHGKT) serves as a coordination point for GTP. The G2 stretch occupies residues 474-478 (GITQH). The interval 495-498 (DTPG) is G3. Residues 495 to 499 (DTPGH) and 549 to 552 (NKMD) contribute to the GTP site. Residues 549–552 (NKMD) are G4. The interval 585–587 (SAK) is G5.

Belongs to the TRAFAC class translation factor GTPase superfamily. Classic translation factor GTPase family. IF-2 subfamily.

The protein resides in the cytoplasm. In terms of biological role, one of the essential components for the initiation of protein synthesis. Protects formylmethionyl-tRNA from spontaneous hydrolysis and promotes its binding to the 30S ribosomal subunits. Also involved in the hydrolysis of GTP during the formation of the 70S ribosomal complex. The polypeptide is Translation initiation factor IF-2 (Helicobacter acinonychis (strain Sheeba)).